A 215-amino-acid chain; its full sequence is Cytochrome b6 (215 aa).

A helical membrane pass occupies residues Ile32–Phe52. Cys35 serves as a coordination point for heme c. Positions 86 and 100 each coordinate heme b. Helical transmembrane passes span Ala90 to Phe110, Leu116 to Tyr136, and Leu186 to Ile206. Residues His187 and His202 each contribute to the heme b site.

This sequence belongs to the cytochrome b family. PetB subfamily. As to quaternary structure, the 4 large subunits of the cytochrome b6-f complex are cytochrome b6, subunit IV (17 kDa polypeptide, PetD), cytochrome f and the Rieske protein, while the 4 small subunits are PetG, PetL, PetM and PetN. The complex functions as a dimer. Heme b is required as a cofactor. Heme c serves as cofactor.

It localises to the plastid. The protein resides in the chloroplast thylakoid membrane. Component of the cytochrome b6-f complex, which mediates electron transfer between photosystem II (PSII) and photosystem I (PSI), cyclic electron flow around PSI, and state transitions. The chain is Cytochrome b6 from Mesostigma viride (Green alga).